The chain runs to 428 residues: Aminotransferase verI (428 aa).

Lysine 254 is modified (N6-(pyridoxal phosphate)lysine).

Belongs to the class-I pyridoxal-phosphate-dependent aminotransferase family. Pyridoxal 5'-phosphate is required as a cofactor.

Its pathway is mycotoxin biosynthesis. Functionally, aminotransferase; part of the gene cluster that mediates the biosynthesis of 11'-deoxyverticillin A, one of the dimeric epipolythiodioxopiperazines (ETPs) from the verticillin family that act as mycotoxins. 11'-deoxyverticillin A is required for normal conidiation. The nonribosomal peptide synthetase verP is speculated to be responsible for condensation of amino acids to form the carbon skeleton of verticillin, whereas the cluster-specific tailoring enzymes are involved in further modifications leading to the production of 11'-deoxyverticillin A. This is Aminotransferase verI from Clonostachys rogersoniana.